The chain runs to 692 residues: Centrosomal protein of 83 kDa (692 aa).

Coiled coils occupy residues 32–625 (RCEH…SLIL) and 656–689 (HLQE…ELGS). S689 bears the Phosphoserine mark.

This sequence belongs to the CEP83 family. In terms of assembly, interacts with CEP164 and IFT20.

The protein resides in the cytoplasm. Its subcellular location is the cytoskeleton. It localises to the microtubule organizing center. It is found in the centrosome. The protein localises to the centriole. Functionally, component of the distal appendage region of the centriole involved in the initiation of primary cilium assembly. May collaborate with IFT20 in the trafficking of ciliary membrane proteins from the Golgi complex to the cilium during the initiation of primary cilium assembly. The polypeptide is Centrosomal protein of 83 kDa (Cep83) (Mus musculus (Mouse)).